Consider the following 101-residue polypeptide: uncharacterized protein (101 aa).

The N-terminal stretch at M1–A23 is a signal peptide. The chain crosses the membrane as a helical span at residues F38–A58.

It is found in the host membrane. This is an uncharacterized protein from Cryphonectria parasitica (Chestnut blight fungus).